A 584-amino-acid chain; its full sequence is Cytosolic Fe-S cluster assembly factor NAR1 (584 aa).

Cys-20, Cys-81, Cys-84, Cys-87, Cys-190, Cys-245, Cys-465, and Cys-469 together coordinate [4Fe-4S] cluster.

The protein belongs to the NARF family.

Its function is as follows. Component of the cytosolic Fe/S protein assembly machinery. Required for maturation of extramitochondrial Fe/S proteins. May play a role in the transfer of pre-assembled Fe/S clusters to target apoproteins. The sequence is that of Cytosolic Fe-S cluster assembly factor NAR1 (NAR1) from Candida dubliniensis (strain CD36 / ATCC MYA-646 / CBS 7987 / NCPF 3949 / NRRL Y-17841) (Yeast).